A 282-amino-acid polypeptide reads, in one-letter code: Putative SLC9B1-like protein SLC9B1P1 (282 aa).

7 helical membrane-spanning segments follow: residues 27-47 (LLAI…GGMI), 51-71 (IASL…GFFV), 87-107 (GFLV…IGLH), 135-155 (IITN…GAEV), 174-194 (LALC…GFSF), 198-218 (IFIA…GPLA), and 239-259 (VAFL…GILG).

The protein belongs to the monovalent cation:proton antiporter 1 (CPA1) transporter (TC 2.A.36) family.

It is found in the membrane. This chain is Putative SLC9B1-like protein SLC9B1P1 (SLC9B1P1), found in Homo sapiens (Human).